The chain runs to 130 residues: Small ribosomal subunit protein uS9 (130 aa).

It belongs to the universal ribosomal protein uS9 family.

This chain is Small ribosomal subunit protein uS9, found in Clostridioides difficile (strain 630) (Peptoclostridium difficile).